Reading from the N-terminus, the 251-residue chain is HTH-type transcriptional regulator UlaR (251 aa).

In terms of domain architecture, HTH deoR-type spans 3-58; it reads EAQRHQILLEMLAQLGFVTVEKVVERLGISPATARRDINKLDESGKLKKVRNGAEA. The segment at residues 20-39 is a DNA-binding region (H-T-H motif); that stretch reads VTVEKVVERLGISPATARRD.

It localises to the cytoplasm. Its function is as follows. Represses ulaG and the ulaABCDEF operon. The chain is HTH-type transcriptional regulator UlaR from Escherichia coli (strain SMS-3-5 / SECEC).